A 284-amino-acid polypeptide reads, in one-letter code: Tropomyosin alpha-3 chain (284 aa).

Residue Met1 is modified to N-acetylmethionine. Residues 1–40 are disordered; sequence MEAIKKKMQMLKLDKENALDRAEQAEAEQKQAEERSKQLE. Residues 1–284 adopt a coiled-coil conformation; the sequence is MEAIKKKMQM…DHALNDMTSI (284 aa). Residues 12–40 show a composition bias toward basic and acidic residues; the sequence is KLDKENALDRAEQAEAEQKQAEERSKQLE. Phosphothreonine is present on Thr53. 2 positions are modified to phosphoserine: Ser61 and Ser87. Thr108 and Thr252 each carry phosphothreonine. At Tyr261 the chain carries Phosphotyrosine. Residue Ser271 is modified to Phosphoserine. Thr282 is subject to Phosphothreonine. The residue at position 283 (Ser283) is a Phosphoserine.

It belongs to the tropomyosin family. Homodimer. Heterodimer of an alpha (TPM1, TPM3 or TPM4) and a beta (TPM2) chain. Interacts with TMOD1. Interacts with TNNT1.

It localises to the cytoplasm. The protein resides in the cytoskeleton. Binds to actin filaments in muscle and non-muscle cells. Plays a central role, in association with the troponin complex, in the calcium dependent regulation of vertebrate striated muscle contraction. Smooth muscle contraction is regulated by interaction with caldesmon. In non-muscle cells is implicated in stabilizing cytoskeleton actin filaments. The chain is Tropomyosin alpha-3 chain (TPM3) from Sus scrofa (Pig).